The primary structure comprises 157 residues: ATP synthase subunit b (157 aa).

A helical transmembrane segment spans residues 7-27; sequence LIAQLVVFFILAWFTMKFVWP.

This sequence belongs to the ATPase B chain family. In terms of assembly, F-type ATPases have 2 components, F(1) - the catalytic core - and F(0) - the membrane proton channel. F(1) has five subunits: alpha(3), beta(3), gamma(1), delta(1), epsilon(1). F(0) has three main subunits: a(1), b(2) and c(10-14). The alpha and beta chains form an alternating ring which encloses part of the gamma chain. F(1) is attached to F(0) by a central stalk formed by the gamma and epsilon chains, while a peripheral stalk is formed by the delta and b chains.

It is found in the cell inner membrane. In terms of biological role, f(1)F(0) ATP synthase produces ATP from ADP in the presence of a proton or sodium gradient. F-type ATPases consist of two structural domains, F(1) containing the extramembraneous catalytic core and F(0) containing the membrane proton channel, linked together by a central stalk and a peripheral stalk. During catalysis, ATP synthesis in the catalytic domain of F(1) is coupled via a rotary mechanism of the central stalk subunits to proton translocation. Component of the F(0) channel, it forms part of the peripheral stalk, linking F(1) to F(0). This is ATP synthase subunit b from Azoarcus sp. (strain BH72).